The following is a 273-amino-acid chain: Formamidopyrimidine-DNA glycosylase (273 aa).

The active-site Schiff-base intermediate with DNA is the P2. The active-site Proton donor is the E3. The Proton donor; for beta-elimination activity role is filled by K58. H91, R109, and R154 together coordinate DNA. An FPG-type zinc finger spans residues F239–K273. R263 functions as the Proton donor; for delta-elimination activity in the catalytic mechanism.

The protein belongs to the FPG family. In terms of assembly, monomer. Zn(2+) is required as a cofactor.

The enzyme catalyses Hydrolysis of DNA containing ring-opened 7-methylguanine residues, releasing 2,6-diamino-4-hydroxy-5-(N-methyl)formamidopyrimidine.. The catalysed reaction is 2'-deoxyribonucleotide-(2'-deoxyribose 5'-phosphate)-2'-deoxyribonucleotide-DNA = a 3'-end 2'-deoxyribonucleotide-(2,3-dehydro-2,3-deoxyribose 5'-phosphate)-DNA + a 5'-end 5'-phospho-2'-deoxyribonucleoside-DNA + H(+). Involved in base excision repair of DNA damaged by oxidation or by mutagenic agents. Acts as a DNA glycosylase that recognizes and removes damaged bases. Has a preference for oxidized purines, such as 7,8-dihydro-8-oxoguanine (8-oxoG). Has AP (apurinic/apyrimidinic) lyase activity and introduces nicks in the DNA strand. Cleaves the DNA backbone by beta-delta elimination to generate a single-strand break at the site of the removed base with both 3'- and 5'-phosphates. The sequence is that of Formamidopyrimidine-DNA glycosylase from Janthinobacterium sp. (strain Marseille) (Minibacterium massiliensis).